The sequence spans 406 residues: Putative colanic acid biosynthesis glycosyltransferase WcaL (406 aa).

The protein belongs to the glycosyltransferase group 1 family. Glycosyltransferase 4 subfamily.

The protein operates within slime biogenesis; slime polysaccharide biosynthesis. The chain is Putative colanic acid biosynthesis glycosyltransferase WcaL (wcaL) from Salmonella typhimurium (strain LT2 / SGSC1412 / ATCC 700720).